Reading from the N-terminus, the 188-residue chain is Putative lipoprotein LprB (188 aa).

The first 27 residues, 1–27, serve as a signal peptide directing secretion; sequence MRCDVRALALAARGLIELMIVIPMVAG. Cys28 is lipidated: N-palmitoyl cysteine. Cys28 carries S-diacylglycerol cysteine lipidation.

Its subcellular location is the cell membrane. In Mycobacterium leprae (strain TN), this protein is Putative lipoprotein LprB (lprB).